Consider the following 334-residue polypeptide: Malate dehydrogenase 2 (334 aa).

19–25 (IGAGKVG) serves as a coordination point for NAD(+). Residues R100 and R106 each contribute to the substrate site. NAD(+)-binding positions include N113 and 136-138 (VSN). Residues N138 and R169 each coordinate substrate. Residue H193 is the Proton acceptor of the active site.

It belongs to the LDH/MDH superfamily.

It catalyses the reaction (S)-malate + NAD(+) = oxaloacetate + NADH + H(+). Catalyzes the reversible oxidation of malate to oxaloacetate. The polypeptide is Malate dehydrogenase 2 (Aquifex aeolicus (strain VF5)).